Reading from the N-terminus, the 361-residue chain is MLQIKEQLKQLTPYQPGKPIEEVKKEFNLDRVVKLASNENPYGCSEAAKEALQIEVQQMALYPDGYSAALRTKLASHLGVNETNIILGNGTDEVIQIISRSLLDPASNTVMANPTFSQYKHNAVIEGAEVREVGLLENGCHDLDAMLKAIDEQTKVVWVCSPNNPTGTYESGRNLIRFLEKVPEHVLAVVDEAYYEYVTAEDYPETIPLLERFPNLMILRTFSKAYGLASLRVGYGIASEQLIQAIEPARQPFNTNRLGQAAALAALGDQAFIHDCVRKNNEGLKQYYDFCDEHGLNYYPSQTNFVLIDFKRDADELFSELLKKGYIVRSGNALGFPTFLRISVGTKEQNEGFLKTLAGML.

Position 224 is an N6-(pyridoxal phosphate)lysine (lysine 224).

This sequence belongs to the class-II pyridoxal-phosphate-dependent aminotransferase family. Histidinol-phosphate aminotransferase subfamily. Homodimer. The cofactor is pyridoxal 5'-phosphate.

It catalyses the reaction L-histidinol phosphate + 2-oxoglutarate = 3-(imidazol-4-yl)-2-oxopropyl phosphate + L-glutamate. It participates in amino-acid biosynthesis; L-histidine biosynthesis; L-histidine from 5-phospho-alpha-D-ribose 1-diphosphate: step 7/9. This Bacillus licheniformis (strain ATCC 14580 / DSM 13 / JCM 2505 / CCUG 7422 / NBRC 12200 / NCIMB 9375 / NCTC 10341 / NRRL NRS-1264 / Gibson 46) protein is Histidinol-phosphate aminotransferase.